A 245-amino-acid polypeptide reads, in one-letter code: Orotidine 5'-phosphate decarboxylase (245 aa).

Residues D22, K44, 71-80 (DLKFHDIPNT), T131, R192, Q201, G221, and R222 contribute to the substrate site. Residue K73 is the Proton donor of the active site.

Belongs to the OMP decarboxylase family. Type 1 subfamily. Homodimer.

It carries out the reaction orotidine 5'-phosphate + H(+) = UMP + CO2. It participates in pyrimidine metabolism; UMP biosynthesis via de novo pathway; UMP from orotate: step 2/2. Its function is as follows. Catalyzes the decarboxylation of orotidine 5'-monophosphate (OMP) to uridine 5'-monophosphate (UMP). The sequence is that of Orotidine 5'-phosphate decarboxylase from Shigella flexneri serotype 5b (strain 8401).